The primary structure comprises 455 residues: Protein U54 (455 aa).

It belongs to the herpesviridae UL82 family.

The sequence is that of Protein U54 (U54) from Homo sapiens (Human).